The sequence spans 458 residues: SH2 domain-containing protein 7 (458 aa).

Residues 51 to 142 form the SH2 domain; the sequence is WFHGFITRKQ…PFGETLAAAC (92 aa). Disordered regions lie at residues 204 to 235 and 267 to 326; these read RSVS…SPAG and AGSL…TLGS. Basic and acidic residues predominate over residues 278 to 288; it reads PSGKLSDEDQN. Positions 304-326 are enriched in polar residues; that stretch reads QGSTMPYTSLGFSLPPSSETLGS.

This Mus musculus (Mouse) protein is SH2 domain-containing protein 7 (Sh2d7).